Here is a 105-residue protein sequence, read N- to C-terminus: Small ribosomal subunit protein uS10 (105 aa).

It belongs to the universal ribosomal protein uS10 family. Part of the 30S ribosomal subunit.

Functionally, involved in the binding of tRNA to the ribosomes. This is Small ribosomal subunit protein uS10 from Rickettsia typhi (strain ATCC VR-144 / Wilmington).